The chain runs to 484 residues: Glutamate--tRNA ligase (484 aa).

A 'HIGH' region motif is present at residues 11–21 (PSPTGYLHIGN). A 'KMSKS' region motif is present at residues 252–256 (KLSKR). Position 255 (K255) interacts with ATP.

It belongs to the class-I aminoacyl-tRNA synthetase family. Glutamate--tRNA ligase type 1 subfamily. In terms of assembly, monomer.

It is found in the cytoplasm. The catalysed reaction is tRNA(Glu) + L-glutamate + ATP = L-glutamyl-tRNA(Glu) + AMP + diphosphate. Functionally, catalyzes the attachment of glutamate to tRNA(Glu) in a two-step reaction: glutamate is first activated by ATP to form Glu-AMP and then transferred to the acceptor end of tRNA(Glu). This Staphylococcus aureus (strain COL) protein is Glutamate--tRNA ligase.